A 255-amino-acid polypeptide reads, in one-letter code: DNA repair protein RecO (255 aa).

Belongs to the RecO family.

Involved in DNA repair and RecF pathway recombination. This chain is DNA repair protein RecO, found in Listeria welshimeri serovar 6b (strain ATCC 35897 / DSM 20650 / CCUG 15529 / CIP 8149 / NCTC 11857 / SLCC 5334 / V8).